Consider the following 878-residue polypeptide: Vacuolar membrane protease (878 aa).

Topologically, residues 1-16 (MASLRLPRANPLAFTR) are cytoplasmic. Residues 17-37 (WPVTVITAIVYLALLIPLLVV) form a helical membrane-spanning segment. At 38–390 (HHVVPSAPSS…STFVLFQLHT (353 aa)) the chain is on the vacuolar side. 2 N-linked (GlcNAc...) asparagine glycosylation sites follow: Asn53 and Asn119. His174 and Asp186 together coordinate Zn(2+). Glu220 functions as the Proton acceptor in the catalytic mechanism. Zn(2+) is bound by residues Glu221, Glu246, and His319. Residues 391–411 (LFALLVTLLIVGPLTLLFTSI) traverse the membrane as a helical segment. The Cytoplasmic portion of the chain corresponds to 412–442 (ALTKADKMYLFRSSAKSEDRLDVVPLQGLRG). The helical transmembrane segment at 443-463 (FFRFPFLFGIPTVVTVGLAYL) threads the bilayer. Topologically, residues 464–473 (VTKVNPYIIH) are vacuolar. Residues 474–494 (SSAYAVWSMMVAAWVFLAWFV) form a helical membrane-spanning segment. Over 495–508 (SRVADFARPSAFHR) the chain is Cytoplasmic. The chain crosses the membrane as a helical span at residues 509–529 (IYTLTWMYVLSWVSAVIATVY). Over 530–533 (ANQR) the chain is Vacuolar. A helical membrane pass occupies residues 534–554 (GLAGGYFIFFFHAGIFLATWI). The Cytoplasmic segment spans residues 555–659 (SYLELFALPS…ALPKWTWGLQ (105 aa)). Low complexity predominate over residues 577–590 (GRASGHGSRRGTTS). Residues 577–611 (GRASGHGSRRGTTSGEDDGEEAEEEPTESTSLLGS) are disordered. Residues 591–603 (GEDDGEEAEEEPT) show a composition bias toward acidic residues. The chain crosses the membrane as a helical span at residues 660 to 680 (LLLTAPITLIMVGPLALLTIS). At 681–693 (AISQTGQDGGHPL) the chain is on the vacuolar side. A helical transmembrane segment spans residues 694-714 (FAYVAIAIFTTIMLTPLLPFI). Residues 715–721 (HRYTYHV) are Cytoplasmic-facing. The helical transmembrane segment at 722-742 (PLFLLAVFLGTLIYNLVAFPF) threads the bilayer. The Vacuolar segment spans residues 743–878 (SDSNRLKLYY…RRAFEIGNDD (136 aa)).

This sequence belongs to the peptidase M28 family. The cofactor is Zn(2+).

The protein resides in the vacuole membrane. May be involved in vacuolar sorting and osmoregulation. This is Vacuolar membrane protease from Aspergillus flavus (strain ATCC 200026 / FGSC A1120 / IAM 13836 / NRRL 3357 / JCM 12722 / SRRC 167).